The chain runs to 351 residues: UDP-3-O-acylglucosamine N-acyltransferase (351 aa).

His-240 (proton acceptor) is an active-site residue.

It belongs to the transferase hexapeptide repeat family. LpxD subfamily. As to quaternary structure, homotrimer.

It carries out the reaction a UDP-3-O-[(3R)-3-hydroxyacyl]-alpha-D-glucosamine + a (3R)-hydroxyacyl-[ACP] = a UDP-2-N,3-O-bis[(3R)-3-hydroxyacyl]-alpha-D-glucosamine + holo-[ACP] + H(+). It participates in bacterial outer membrane biogenesis; LPS lipid A biosynthesis. Catalyzes the N-acylation of UDP-3-O-acylglucosamine using 3-hydroxyacyl-ACP as the acyl donor. Is involved in the biosynthesis of lipid A, a phosphorylated glycolipid that anchors the lipopolysaccharide to the outer membrane of the cell. This is UDP-3-O-acylglucosamine N-acyltransferase from Pseudomonas fluorescens (strain ATCC BAA-477 / NRRL B-23932 / Pf-5).